Here is a 359-residue protein sequence, read N- to C-terminus: Protein URE2 (359 aa).

The tract at residues 39–82 is disordered; that stretch reads FSAGVNNNNNNSSSSNNNNNNNNNAQNNNSGRNGSQSNDNGNNI. The segment covering 44 to 81 has biased composition (low complexity); it reads NNNNNNSSSSNNNNNNNNNAQNNNSGRNGSQSNDNGNN. The 85-residue stretch at 117–201 folds into the GST N-terminal domain; that stretch reads EGYTLFSHRS…HLVNKYYKET (85 aa). In terms of domain architecture, GST C-terminal spans 210–359; it reads DLADQSQINA…PAVIKALRGE (150 aa).

It belongs to the GST superfamily. As to quaternary structure, homodimer.

Plays an important role in the cellular response to the nitrogen source. URE2 gene plays a major part in the repression of GLN1 and GDH2 genes by glutamine, and is required for the inactivation of glutamine synthetase. URE2 gene product may catalytically inactivate GLN3 in response to an increase in the intracellular concentration of glutamine. The sequence is that of Protein URE2 (URE2) from Saccharomyces paradoxus (Yeast).